The chain runs to 218 residues: Putative inactive cathepsin L-like protein CTSL3P (218 aa).

Disordered stretches follow at residues 144 to 173 (GDWK…EVAQ) and 195 to 218 (GDED…EAQV). The span at 201–212 (EDKWPHDMRNHL) shows a compositional bias: basic and acidic residues.

This sequence belongs to the peptidase C1 family.

This is Putative inactive cathepsin L-like protein CTSL3P (CTSL3P) from Homo sapiens (Human).